Here is a 293-residue protein sequence, read N- to C-terminus: Pantothenate synthetase (293 aa).

Position 30–37 (30–37 (MGYLHKGH)) interacts with ATP. The active-site Proton donor is the H37. Q61 is a (R)-pantoate binding site. Q61 contributes to the beta-alanine binding site. Residue 147-150 (GEKD) coordinates ATP. Q153 provides a ligand contact to (R)-pantoate. Residues V176 and 184-187 (CSSR) contribute to the ATP site.

The protein belongs to the pantothenate synthetase family. Homodimer.

It is found in the cytoplasm. It carries out the reaction (R)-pantoate + beta-alanine + ATP = (R)-pantothenate + AMP + diphosphate + H(+). Its pathway is cofactor biosynthesis; (R)-pantothenate biosynthesis; (R)-pantothenate from (R)-pantoate and beta-alanine: step 1/1. Catalyzes the condensation of pantoate with beta-alanine in an ATP-dependent reaction via a pantoyl-adenylate intermediate. This Brucella canis (strain ATCC 23365 / NCTC 10854 / RM-666) protein is Pantothenate synthetase.